A 910-amino-acid polypeptide reads, in one-letter code: Leucine--tRNA ligase (910 aa).

The short motif at 50-60 is the 'HIGH' region element; that stretch reads PYTNGSLHVGH. The 'KMSKS' region signature appears at 611-615; sequence KISKS. Lys614 lines the ATP pocket.

It belongs to the class-I aminoacyl-tRNA synthetase family.

The protein resides in the cytoplasm. It carries out the reaction tRNA(Leu) + L-leucine + ATP = L-leucyl-tRNA(Leu) + AMP + diphosphate. The sequence is that of Leucine--tRNA ligase from Thermoplasma volcanium (strain ATCC 51530 / DSM 4299 / JCM 9571 / NBRC 15438 / GSS1).